Consider the following 329-residue polypeptide: DNA-directed RNA polymerase subunit alpha (329 aa).

The interval 1–235 (MQGSVTEFLK…EQLDAFVDLR (235 aa)) is alpha N-terminal domain (alpha-NTD). The alpha C-terminal domain (alpha-CTD) stretch occupies residues 249–329 (FDPILLRPVD…NWPPASIAED (81 aa)).

This sequence belongs to the RNA polymerase alpha chain family. In terms of assembly, homodimer. The RNAP catalytic core consists of 2 alpha, 1 beta, 1 beta' and 1 omega subunit. When a sigma factor is associated with the core the holoenzyme is formed, which can initiate transcription.

It catalyses the reaction RNA(n) + a ribonucleoside 5'-triphosphate = RNA(n+1) + diphosphate. Functionally, DNA-dependent RNA polymerase catalyzes the transcription of DNA into RNA using the four ribonucleoside triphosphates as substrates. In Pasteurella multocida (strain Pm70), this protein is DNA-directed RNA polymerase subunit alpha.